The chain runs to 284 residues: Tropomyosin (284 aa).

Methionine 1 carries the N-acetylmethionine modification. The disordered stretch occupies residues 1 to 42 (MDAIKKKMQAMKLEKDNAMDRADTLEQQNKEANNRAEKSEEE). Residues 1-284 (MDAIKKKMQA…DQTFSELSGY (284 aa)) adopt a coiled-coil conformation. Basic and acidic residues predominate over residues 12 to 38 (KLEKDNAMDRADTLEQQNKEANNRAEK).

This sequence belongs to the tropomyosin family. In terms of assembly, homodimer.

Tropomyosin, in association with the troponin complex, plays a central role in the calcium dependent regulation of muscle contraction. In Pandalus borealis (Northern red shrimp), this protein is Tropomyosin.